The chain runs to 468 residues: Protein ABHD15 (468 aa).

The N-terminal stretch at 1–23 (MPPWGAALALILAVLALLGLLGP) is a signal peptide. Residues 33–61 (VGERTLPGAQDRDDGEEADGGGPADQFSD) are disordered. Active-site charge relay system residues include aspartate 360 and histidine 391. Serine 434 is modified (phosphoserine).

This sequence belongs to the AB hydrolase superfamily. AB hydrolase 4 family. In terms of assembly, interacts with PDE3B; this interaction regulates PDE3B's stability and expression and, thereby, impacts the antilipolytic action of insulin.

Its subcellular location is the secreted. In terms of biological role, may regulate adipocyte lipolysis and liver lipid accumulation. This chain is Protein ABHD15, found in Homo sapiens (Human).